The sequence spans 148 residues: MVRVLRGLPWRGLWLLLAHQLFLVTACQDAHYGTLMQELCLSRFQKDMEAMERTLWCDWGKTIGSYGELTDCTRNLAERLGCFWPNVEVDRFFVAVHRHYFRSCPASGRALGDPPSTILCPFVVLPITVTLLVTALVVWRSKRAESIV.

Residues 1 to 26 form the signal peptide; sequence MVRVLRGLPWRGLWLLLAHQLFLVTA. Cystine bridges form between C27–C82, C40–C72, and C57–C104. Topologically, residues 27-118 are extracellular; sequence CQDAHYGTLM…RALGDPPSTI (92 aa). The helical transmembrane segment at 119-140 threads the bilayer; it reads LCPFVVLPITVTLLVTALVVWR. The Cytoplasmic segment spans residues 141–148; the sequence is SKRAESIV.

This sequence belongs to the RAMP family. As to quaternary structure, heterodimer of CALCRL and RAMP1; the interaction induces allosteric modulation of CALCRL function and CGRP1/CALCA and CGRP2/CALCB ligand specificity. Heterodimer of CALCR and RAMP1; interaction forms the AMYR1 receptor complex for amylin/IAPP and CGRP1/CALCA ligands.

Its subcellular location is the cell membrane. In terms of biological role, accessory protein that interacts with and modulates the function of G-protein coupled receptors including calcitonin gene-related peptide type 1 receptor (CALCRL) and calcitonin receptor (CALCR). Required for the transport of CALCRL to the plasma membrane. Together with CALCRL, form the receptor complex for the calcitonin gene-related peptides CGRP1/CALCA and CGRP2/CALCB. Together with CALCR, form the AMYR1 receptor complex for amylin/IAPP and CGRP1/CALCA. The sequence is that of Receptor activity-modifying protein 1 (RAMP1) from Cavia porcellus (Guinea pig).